We begin with the raw amino-acid sequence, 233 residues long: Large ribosomal subunit protein uL1 (233 aa).

The protein belongs to the universal ribosomal protein uL1 family. In terms of assembly, part of the 50S ribosomal subunit.

Functionally, binds directly to 23S rRNA. The L1 stalk is quite mobile in the ribosome, and is involved in E site tRNA release. Protein L1 is also a translational repressor protein, it controls the translation of the L11 operon by binding to its mRNA. The chain is Large ribosomal subunit protein uL1 from Shewanella woodyi (strain ATCC 51908 / MS32).